A 271-amino-acid polypeptide reads, in one-letter code: Regulatory protein RecX (271 aa).

The protein belongs to the RecX family.

It is found in the cytoplasm. Modulates RecA activity. This Lactobacillus johnsonii (strain CNCM I-12250 / La1 / NCC 533) protein is Regulatory protein RecX.